We begin with the raw amino-acid sequence, 543 residues long: CTP synthase (543 aa).

Positions 1–265 (MARYIFITGG…DDEVLAAFAI (265 aa)) are amidoligase domain. A CTP-binding site is contributed by Ser-13. Ser-13 provides a ligand contact to UTP. 14–19 (SLGKGL) serves as a coordination point for ATP. Tyr-54 contributes to the L-glutamine binding site. Asp-71 lines the ATP pocket. Residues Asp-71 and Glu-139 each coordinate Mg(2+). Residues 146–148 (DIE), 186–191 (KTKPTQ), and Lys-222 contribute to the CTP site. UTP-binding positions include 186–191 (KTKPTQ) and Lys-222. An ATP-binding site is contributed by 238–240 (RDA). Residues 291–542 (TIAIVGKYTG…IEAALVRSRL (252 aa)) enclose the Glutamine amidotransferase type-1 domain. Gly-353 contributes to the L-glutamine binding site. Cys-380 (nucleophile; for glutamine hydrolysis) is an active-site residue. L-glutamine contacts are provided by residues 381 to 384 (FGMQ), Glu-404, and Arg-470. Catalysis depends on residues His-515 and Glu-517.

This sequence belongs to the CTP synthase family. In terms of assembly, homotetramer.

The enzyme catalyses UTP + L-glutamine + ATP + H2O = CTP + L-glutamate + ADP + phosphate + 2 H(+). It catalyses the reaction L-glutamine + H2O = L-glutamate + NH4(+). It carries out the reaction UTP + NH4(+) + ATP = CTP + ADP + phosphate + 2 H(+). It functions in the pathway pyrimidine metabolism; CTP biosynthesis via de novo pathway; CTP from UDP: step 2/2. With respect to regulation, allosterically activated by GTP, when glutamine is the substrate; GTP has no effect on the reaction when ammonia is the substrate. The allosteric effector GTP functions by stabilizing the protein conformation that binds the tetrahedral intermediate(s) formed during glutamine hydrolysis. Inhibited by the product CTP, via allosteric rather than competitive inhibition. Its function is as follows. Catalyzes the ATP-dependent amination of UTP to CTP with either L-glutamine or ammonia as the source of nitrogen. Regulates intracellular CTP levels through interactions with the four ribonucleotide triphosphates. The chain is CTP synthase from Rhodopseudomonas palustris (strain HaA2).